Here is a 1622-residue protein sequence, read N- to C-terminus: DNA (cytosine-5)-methyltransferase 1 (1622 aa).

Residues methionine 1–methionine 145 form an interaction with DNMT3A region. Interaction with the PRC2/EED-EZH2 complex stretches follow at residues methionine 1–lysine 342 and threonine 304–asparagine 610. At serine 15 the chain carries Phosphoserine. The DMAP1-binding domain maps to proline 16–asparagine 109. Lysine 70 bears the N6,N6-dimethyllysine; by EHMT2 mark. Residues threonine 100–proline 360 are disordered. Positions proline 126 to arginine 137 are enriched in basic residues. At serine 138 the chain carries Phosphoserine. An N6-methyllysine; by SETD7 modification is found at lysine 139. Serine 140 carries the post-translational modification Phosphoserine; by PKB/AKT1. Residues isoleucine 146–glutamate 213 form an interaction with DNMT3B region. Residues serine 149 and serine 151 each carry the phosphoserine modification. Low complexity predominate over residues serine 149–serine 166. Threonine 163 bears the Phosphothreonine mark. An N6-acetyllysine modification is found at lysine 169. A Nuclear localization signal motif is present at residues lysine 173–arginine 200. 4 stretches are compositionally biased toward basic and acidic residues: residues proline 176–lysine 197, arginine 207–arginine 222, aspartate 237–aspartate 269, and lysine 276–valine 300. Position 304 is a phosphothreonine (threonine 304). The interval lysine 327 to leucine 556 is DNA replication foci-targeting sequence. Cysteine 359 and cysteine 362 together coordinate Zn(2+). Position 372 is an N6-acetyllysine (lysine 372). Residue serine 400 is modified to Phosphoserine. Zn(2+) is bound by residues cysteine 420 and histidine 424. Residues serine 515 and serine 555 each carry the phosphoserine modification. The segment at asparagine 650–proline 696 adopts a CXXC-type zinc-finger fold. Zn(2+)-binding residues include cysteine 657, cysteine 660, cysteine 663, cysteine 668, cysteine 671, cysteine 674, cysteine 690, and cysteine 695. An autoinhibitory linker region spans residues asparagine 697 to glutamate 758. Residues glutamate 702–aspartate 733 form a disordered region. The segment covering alanine 703–proline 714 has biased composition (acidic residues). Phosphoserine is present on serine 718. Over residues lysine 720–asparagine 731 the composition is skewed to basic residues. A Phosphoserine modification is found at serine 736. The residue at position 753 (lysine 753) is an N6-acetyllysine. Positions glutamate 759 to proline 884 constitute a BAH 1 domain. Serine 882 carries the post-translational modification Phosphoserine. 3 positions are modified to N6-acetyllysine: lysine 895, lysine 961, and lysine 980. Residues threonine 977–proline 1105 form the BAH 2 domain. The disordered stretch occupies residues lysine 1099 to alanine 1138. 6 consecutive repeat copies span residues lysine 1114–glycine 1115, lysine 1116–glycine 1117, lysine 1118–glycine 1119, lysine 1120–glycine 1121, lysine 1122–glycine 1123, and lysine 1124–glycine 1125. Positions lysine 1114–proline 1127 are 7 X 2 AA tandem repeats of K-G. Basic residues predominate over residues glycine 1115–glycine 1125. N6-acetyllysine occurs at positions 1116, 1118, 1120, 1122, 1124, and 1126. The 7; approximate repeat unit spans residues lysine 1126 to proline 1127. The interaction with the PRC2/EED-EZH2 complex stretch occupies residues lysine 1126 to aspartate 1622. The region spanning leucine 1144–serine 1603 is the SAM-dependent MTase C5-type domain. A catalytic region spans residues leucine 1144–aspartate 1622. S-adenosyl-L-methionine-binding positions include serine 1151, glycine 1155–leucine 1156, glutamate 1173–methionine 1174, aspartate 1195–cysteine 1196, and cysteine 1196. Cysteine 1231 is a catalytic residue. The residue at position 1354 (lysine 1354) is an N6-acetyllysine. Position 1436 is a phosphoserine (serine 1436). S-adenosyl-L-methionine is bound by residues asparagine 1582 and valine 1584. Lysine 1613 is covalently cross-linked (Glycyl lysine isopeptide (Lys-Gly) (interchain with G-Cter in SUMO2)).

This sequence belongs to the class I-like SAM-binding methyltransferase superfamily. C5-methyltransferase family. As to quaternary structure, homodimer. Forms a stable complex with E2F1, BB1 and HDAC1. Forms a complex with DMAP1 and HDAC2, with direct interaction. Interacts with the PRC2/EED-EZH2 complex. Probably part of a corepressor complex containing ZNF304, TRIM28, SETDB1 and DNMT1. Interacts with UHRF1; promoting its recruitment to hemimethylated DNA. Interacts with USP7, promoting its deubiquitination. Interacts with PCNA. Interacts with MBD2 and MBD3. Interacts with DNMT3A and DNMT3B. Interacts with UBC9. Interacts with CSNK1D. Interacts with HDAC1. Interacts with BAZ2A/TIP5. Interacts with SIRT7. Interacts with ZNF263; recruited to the SIX3 promoter along with other proteins involved in chromatin modification and transcriptional corepression where it contributes to transcriptional repression. Interacts with L3MBTL3 and DCAF5; the interaction requires DNMT1 methylation at Lys-139 and is necessary to target DNMT1 for ubiquitination by the CRL4-DCAF5 E3 ubiquitin ligase complex and proteasomal degradation. Interacts with PHF20L1; the interaction requires DNMT1 methylation at Lys-139 and protects DNMT1 from ubiquitination and proteasomal degradation. In terms of processing, sumoylated; sumoylation increases activity. Acetylation on multiple lysines, mainly by KAT2B/PCAF, regulates cell cycle G(2)/M transition. Deacetylation of Lys-1116 and Lys-1354 by SIRT1 increases methyltransferase activity. Post-translationally, phosphorylation of Ser-151 by CDKs is important for enzymatic activity and protein stability. Phosphorylation of Ser-140 by AKT1 prevents methylation by SETD7 thereby increasing DNMT1 stability. In terms of processing, methylation at Lys-139 by SETD7 is necessary for the regulation of DNMT1 proteasomal degradation. Ubiquitinated by UHRF1; interaction with USP7 counteracts ubiquitination by UHRF1 by promoting deubiquitination and preventing degradation by the proteasome. In terms of tissue distribution, isoforms 0 and 8 are highly expressed in placenta, brain, lung, spleen, kidney, heart, and at much lower levels in liver. Isoform 1 is expressed in cerebellum, isoform 2 in muscle and testis, isoform 3 in lung, isoform 4 in spleen and brain, and isoform 5 in brain.

The protein localises to the nucleus. It catalyses the reaction a 2'-deoxycytidine in DNA + S-adenosyl-L-methionine = a 5-methyl-2'-deoxycytidine in DNA + S-adenosyl-L-homocysteine + H(+). In terms of biological role, methylates CpG residues. Preferentially methylates hemimethylated DNA. Associates with DNA replication sites in S phase maintaining the methylation pattern in the newly synthesized strand, that is essential for epigenetic inheritance. Associates with chromatin during G2 and M phases to maintain DNA methylation independently of replication. It is responsible for maintaining methylation patterns established in development. DNA methylation is coordinated with methylation of histones. Mediates transcriptional repression by direct binding to HDAC2. In association with DNMT3B and via the recruitment of CTCFL/BORIS, involved in activation of BAG1 gene expression by modulating dimethylation of promoter histone H3 at H3K4 and H3K9. Probably forms a corepressor complex required for activated KRAS-mediated promoter hypermethylation and transcriptional silencing of tumor suppressor genes (TSGs) or other tumor-related genes in colorectal cancer (CRC) cells. Also required to maintain a transcriptionally repressive state of genes in undifferentiated embryonic stem cells (ESCs). Associates at promoter regions of tumor suppressor genes (TSGs) leading to their gene silencing. Promotes tumor growth. This is DNA (cytosine-5)-methyltransferase 1 (Dnmt1) from Rattus norvegicus (Rat).